Here is a 228-residue protein sequence, read N- to C-terminus: MQKLKQQVFEANMDLPRYGLVTFTWGNVSAIDRERGLVVIKPSGIAYESMKAADMVVVDMSGKVVEGEYRPSSDTATHLELYRRYPSLGGIVHTHSTHATAWAQAGLAIPALGTTHADYFFGDIPCTRGLSEEEVQGEYELNTGKVIIETLGNAEPLHTPGIVVYQHGPFAWGKDAHDAVHNAVVMEEVAKMAWIARSINPQLNHIDSYLMNKHFMRKHGPNAYYGQK.

Substrate is bound by residues 26–27, 43–44, and 72–73; these read GN, SG, and SS. Aspartate 74, histidine 93, and histidine 95 together coordinate Zn(2+). Aspartate 118 (proton donor/acceptor) is an active-site residue. Zn(2+) is bound at residue histidine 167. Tyrosine 225 serves as the catalytic Proton donor/acceptor.

The protein belongs to the aldolase class II family. AraD/FucA subfamily. It depends on Zn(2+) as a cofactor.

It catalyses the reaction L-ribulose 5-phosphate = D-xylulose 5-phosphate. The protein operates within cofactor degradation; L-ascorbate degradation; D-xylulose 5-phosphate from L-ascorbate: step 4/4. Functionally, catalyzes the isomerization of L-ribulose 5-phosphate to D-xylulose 5-phosphate. Is involved in the anaerobic L-ascorbate utilization. The chain is L-ribulose-5-phosphate 4-epimerase UlaF from Escherichia coli O7:K1 (strain IAI39 / ExPEC).